The following is a 730-amino-acid chain: Replication restart protein PriA (730 aa).

Residues 212-378 enclose the Helicase ATP-binding domain; sequence LLFHSGFNVW…QNGKYQHLVL (167 aa). 225 to 232 contributes to the ATP binding site; it reads GVTGSGKT. The short motif at 321-324 is the DEAH box element; the sequence is DEEH. Zn(2+) contacts are provided by cysteine 437, cysteine 440, cysteine 446, cysteine 449, cysteine 464, cysteine 467, cysteine 477, and cysteine 480. The region spanning 472-640 is the Helicase C-terminal domain; it reads TIPRQCGDCG…LPPFTFQALI (169 aa).

This sequence belongs to the helicase family. PriA subfamily. Component of the replication restart primosome. Zn(2+) serves as cofactor.

The catalysed reaction is Couples ATP hydrolysis with the unwinding of duplex DNA by translocating in the 3'-5' direction.. It carries out the reaction ATP + H2O = ADP + phosphate + H(+). Initiates the restart of stalled replication forks, which reloads the replicative helicase on sites other than the origin of replication. Recognizes and binds to abandoned replication forks and remodels them to uncover a helicase loading site. Promotes assembly of the primosome at these replication forks. This chain is Replication restart protein PriA, found in Haemophilus influenzae (strain ATCC 51907 / DSM 11121 / KW20 / Rd).